We begin with the raw amino-acid sequence, 390 residues long: DNA primase small subunit PriS (390 aa).

Catalysis depends on residues aspartate 98, aspartate 100, and aspartate 296.

The protein belongs to the eukaryotic-type primase small subunit family. Heterodimer of a small subunit (PriS) and a large subunit (PriL). Requires Mg(2+) as cofactor. The cofactor is Mn(2+).

Its function is as follows. Catalytic subunit of DNA primase, an RNA polymerase that catalyzes the synthesis of short RNA molecules used as primers for DNA polymerase during DNA replication. The small subunit contains the primase catalytic core and has DNA synthesis activity on its own. Binding to the large subunit stabilizes and modulates the activity, increasing the rate of DNA synthesis while decreasing the length of the DNA fragments, and conferring RNA synthesis capability. The DNA polymerase activity may enable DNA primase to also catalyze primer extension after primer synthesis. May also play a role in DNA repair. This chain is DNA primase small subunit PriS, found in Methanococcoides burtonii (strain DSM 6242 / NBRC 107633 / OCM 468 / ACE-M).